The chain runs to 105 residues: Chloroacetanilide N-alkylformylase 2, ferredoxin component (105 aa).

Positions 2-105 (PKLVVVTREG…GLTVTIAPED (104 aa)) constitute a 2Fe-2S ferredoxin-type domain. The [2Fe-2S] cluster site is built by Cys-40, Cys-46, Cys-49, and Cys-86.

The protein belongs to the adrenodoxin/putidaredoxin family. As to quaternary structure, the chloroacetanilide N-alkylformylase multicomponent enzyme system is composed of an oxygenase component (CndA) and an electron transfer component formed by a ferredoxin reductase (CndC1) and a ferredoxin (CndB1). In vitro, chloroacetanilide N-alkylformylase assays in which CndB1 is substituted for CndB2 demonstrate that the two enzymes possess nearly identical activities. It depends on [2Fe-2S] cluster as a cofactor.

Its function is as follows. Component of the chloroacetanilide N-alkylformylase multicomponent enzyme system involved in the degradation of chloroacetanilide herbicides (N-alkoxyalkyl-N-chloroacetyl-substituted aniline derivatives). In vitro, functions as an intermediate electron transfer protein. This Rhizorhabdus wittichii (strain DC-6 / KACC 16600) (Sphingomonas wittichii) protein is Chloroacetanilide N-alkylformylase 2, ferredoxin component.